Consider the following 1101-residue polypeptide: Leucine-rich repeat receptor-like serine/threonine-protein kinase At1g17230 (1101 aa).

Residues 1 to 23 (MRGRICFLAIVILCSFSFILVRS) form the signal peptide. Residues 24 to 734 (LNEEGRVLLE…WLINGSQRQK (711 aa)) are Extracellular-facing. N-linked (GlcNAc...) asparagine glycosylation is found at Asn-39, Asn-57, Asn-78, and Asn-97. LRR repeat units follow at residues 66 to 90 (LRTVTSVDLNGMNLSGTLSPLICKL), 91 to 115 (HGLRKLNVSTNFISGPIPQDLSLCR), 117 to 137 (LEVLDLCTNRFHGVIPIQLTM), 138 to 162 (IITLKKLYLCENYLFGSIPRQIGNL), 163 to 186 (SSLQELVIYSNNLTGVIPPSMAKL), 188 to 210 (QLRIIRAGRNGFSGVIPSEISGC), 211 to 234 (ESLKVLGLAENLLEGSLPKQLEKL), 235 to 258 (QNLTDLILWQNRLSGEIPPSVGNI), 260 to 282 (RLEVLALHENYFTGSIPREIGKL), 283 to 306 (TKMKRLYLYTNQLTGEIPREIGNL), 308 to 329 (DAAEIDFSENQLTGFIPKEFGH), 330 to 354 (ILNLKLLHLFENILLGPIPRELGEL), 355 to 379 (TLLEKLDLSINRLNGTIPQELQFLP), 381 to 402 (LVDLQLFDNQLEGKIPPLIGFY), 403 to 426 (SNFSVLDMSANSLSGPIPAHFCRF), 427 to 450 (QTLILLSLGSNKLSGNIPRDLKTC), 451 to 474 (KSLTKLMLGDNQLTGSLPIELFNL), 476 to 498 (NLTALELHQNWLSGNISADLGKL), 499 to 522 (KNLERLRLANNNFTGEIPPEIGNL), 524 to 546 (KIVGFNISSNQLTGHIPKELGSC), 548 to 569 (TIQRLDLSGNKFSGYIAQELGQ), 570 to 593 (LVYLEILRLSDNRLTGEIPHSFGD), 595 to 618 (TRLMELQLGGNLLSENIPVELGKL), 619 to 643 (TSLQISLNISHNNLSGTIPDSLGNL), 644 to 667 (QMLEILYLNDNKLSGEIPASIGNL), and 669 to 692 (SLLICNISNNNLVGTVPDTAVFQR). Residues Asn-161 and Asn-174 are each glycosylated (N-linked (GlcNAc...) asparagine). Residues Asn-236 and Asn-257 are each glycosylated (N-linked (GlcNAc...) asparagine). N-linked (GlcNAc...) asparagine glycosylation is present at Asn-368. The N-linked (GlcNAc...) asparagine glycan is linked to Asn-404. N-linked (GlcNAc...) asparagine glycans are attached at residues Asn-476, Asn-490, Asn-510, Asn-521, and Asn-529. 2 N-linked (GlcNAc...) asparagine glycosylation sites follow: Asn-626 and Asn-631. Asn-674 and Asn-728 each carry an N-linked (GlcNAc...) asparagine glycan. The helical transmembrane segment at 735-755 (ILTITCIVIGSVFLITFLGLC) threads the bilayer. Residues 756 to 1101 (WTIKRREPAF…LEEANSSKEI (346 aa)) are Cytoplasmic-facing. Thr-788 and Thr-796 each carry phosphothreonine. Residues 799–1081 (FSEDVVLGRG…ITEARGSSSL (283 aa)) form the Protein kinase domain. ATP is bound by residues 805-813 (LGRGACGTV) and Lys-827. Phosphotyrosine occurs at positions 874 and 913. Asp-926 acts as the Proton acceptor in catalysis. Ser-960 is subject to Phosphoserine. Residues Tyr-968 and Tyr-975 each carry the phosphotyrosine modification. At Thr-976 the chain carries Phosphothreonine. A disordered region spans residues 1076 to 1101 (RGSSSLSSSSITSETPLEEANSSKEI). Residues 1078–1088 (SSSLSSSSITS) show a composition bias toward low complexity.

This sequence belongs to the protein kinase superfamily. Ser/Thr protein kinase family.

The protein resides in the cell membrane. The enzyme catalyses L-seryl-[protein] + ATP = O-phospho-L-seryl-[protein] + ADP + H(+). It carries out the reaction L-threonyl-[protein] + ATP = O-phospho-L-threonyl-[protein] + ADP + H(+). The chain is Leucine-rich repeat receptor-like serine/threonine-protein kinase At1g17230 from Arabidopsis thaliana (Mouse-ear cress).